The following is a 205-amino-acid chain: Macrophage immunometabolism regulator (205 aa).

The disordered stretch occupies residues 1-40 (MEVDINGVNRTNNSVPSTAEGSSPSKPDPEKPRCSSTPCS). Residues 8–25 (VNRTNNSVPSTAEGSSPS) are compositionally biased toward polar residues.

This sequence belongs to the UNC119-binding protein family. Interacts with unc119 family proteins; interaction preferentially takes place when unc119 proteins are unliganded with myristoylated proteins.

It localises to the cytoplasm. The protein resides in the cell projection. The protein localises to the cilium. May play a role in immune regulation through regulation of the macrophage function. May also play a role in trafficking of proteins via its interaction with unc119 family cargo adapters. May play a role in ciliary membrane localization. In Xenopus laevis (African clawed frog), this protein is Macrophage immunometabolism regulator (macir).